The chain runs to 260 residues: tRNA pseudouridine synthase B (260 aa).

Position 44 (His44) interacts with substrate. Catalysis depends on Asp49, which acts as the Nucleophile. Positions 77, 180, and 201 each coordinate substrate.

This sequence belongs to the pseudouridine synthase TruB family. Type 1 subfamily.

It catalyses the reaction uridine(55) in tRNA = pseudouridine(55) in tRNA. Functionally, responsible for synthesis of pseudouridine from uracil-55 in the psi GC loop of transfer RNAs. This is tRNA pseudouridine synthase B from Blochmanniella pennsylvanica (strain BPEN).